A 226-amino-acid chain; its full sequence is Probable transcriptional regulatory protein y4xI (226 aa).

Positions 1-114 constitute a Response regulatory domain; that stretch reads MRTLLVDTDL…ELIARMRALL (114 aa). A DNA-binding region (ompR/PhoB-type) is located at residues 122 to 220; sequence CPIIEFGNLH…VRGIGYTLEL (99 aa).

It is found in the cytoplasm. In Sinorhizobium fredii (strain NBRC 101917 / NGR234), this protein is Probable transcriptional regulatory protein y4xI.